Here is a 626-residue protein sequence, read N- to C-terminus: Phosphomethylpyrimidine synthase (626 aa).

The segment at 1–22 (MTKQEKAINLSESAQVDQQSVQ) is disordered. Polar residues predominate over residues 10 to 22 (LSESAQVDQQSVQ). Substrate is bound by residues asparagine 232, methionine 261, tyrosine 290, histidine 326, 346–348 (SRG), 387–390 (DGLR), and glutamate 426. Histidine 430 serves as a coordination point for Zn(2+). Tyrosine 453 provides a ligand contact to substrate. A Zn(2+)-binding site is contributed by histidine 494. Residues cysteine 574, cysteine 577, and cysteine 582 each coordinate [4Fe-4S] cluster.

This sequence belongs to the ThiC family. Homodimer. Requires [4Fe-4S] cluster as cofactor.

The enzyme catalyses 5-amino-1-(5-phospho-beta-D-ribosyl)imidazole + S-adenosyl-L-methionine = 4-amino-2-methyl-5-(phosphooxymethyl)pyrimidine + CO + 5'-deoxyadenosine + formate + L-methionine + 3 H(+). Its pathway is cofactor biosynthesis; thiamine diphosphate biosynthesis. Functionally, catalyzes the synthesis of the hydroxymethylpyrimidine phosphate (HMP-P) moiety of thiamine from aminoimidazole ribotide (AIR) in a radical S-adenosyl-L-methionine (SAM)-dependent reaction. In Pseudomonas putida (strain ATCC 47054 / DSM 6125 / CFBP 8728 / NCIMB 11950 / KT2440), this protein is Phosphomethylpyrimidine synthase.